Here is a 108-residue protein sequence, read N- to C-terminus: Iron-sulfur cluster assembly protein CyaY (108 aa).

This sequence belongs to the frataxin family.

Involved in iron-sulfur (Fe-S) cluster assembly. May act as a regulator of Fe-S biogenesis. The sequence is that of Iron-sulfur cluster assembly protein CyaY from Burkholderia ambifaria (strain MC40-6).